Consider the following 360-residue polypeptide: MLVWLAEHLVKYFSGFNVFSYLTFRAIVSLLTALFISLWMGPRLIGWLQKLQIGQVVRNDGPESHFSKRGTPTMGGLMILTSITISVLMWAYPSNPYVWCVLFVLLGYGIVGFVDDYRKVVRKNTDGLIARWKYFWQSVIALVVAFTMYCIGKDTPATQLVVPFFKDIMPQLGLLYILLSYFVIVGTSNAVNLTDGLDGLAIMPTVFVAAGMGLVAWATGNVNFAAYLHIPYIRHAGELVIVCTAIVGAGLGFLWFNTYPAQVFMGDVGSLALGGALGTIAVLLRQEFLLVIMGGVFVMETLSVILQVGSFKLRGQRIFRMAPIHHHYELKGWPEPRVIVRFWIISLMLVLIGLATLKVR.

10 consecutive transmembrane segments (helical) span residues 27–47 (IVSL…LIGW), 72–92 (PTMG…MWAY), 94–114 (SNPY…VGFV), 132–152 (WKYF…YCIG), 168–188 (IMPQ…VGTS), 199–219 (GLAI…AWAT), 236–256 (AGEL…FLWF), 263–283 (VFMG…IAVL), 288–308 (FLLV…ILQV), and 338–358 (VIVR…ATLK).

It belongs to the glycosyltransferase 4 family. MraY subfamily. It depends on Mg(2+) as a cofactor.

Its subcellular location is the cell inner membrane. The enzyme catalyses UDP-N-acetyl-alpha-D-muramoyl-L-alanyl-gamma-D-glutamyl-meso-2,6-diaminopimeloyl-D-alanyl-D-alanine + di-trans,octa-cis-undecaprenyl phosphate = di-trans,octa-cis-undecaprenyl diphospho-N-acetyl-alpha-D-muramoyl-L-alanyl-D-glutamyl-meso-2,6-diaminopimeloyl-D-alanyl-D-alanine + UMP. It participates in cell wall biogenesis; peptidoglycan biosynthesis. Functionally, catalyzes the initial step of the lipid cycle reactions in the biosynthesis of the cell wall peptidoglycan: transfers peptidoglycan precursor phospho-MurNAc-pentapeptide from UDP-MurNAc-pentapeptide onto the lipid carrier undecaprenyl phosphate, yielding undecaprenyl-pyrophosphoryl-MurNAc-pentapeptide, known as lipid I. The sequence is that of Phospho-N-acetylmuramoyl-pentapeptide-transferase from Edwardsiella ictaluri (strain 93-146).